The sequence spans 108 residues: Phosphocarrier protein HPr (108 aa).

One can recognise an HPr domain in the interval 21–108 (ELQATCIVKN…DAFSSGFGEL (88 aa)). Catalysis depends on His-35, which acts as the Pros-phosphohistidine intermediate.

This sequence belongs to the HPr family.

It is found in the cytoplasm. Functionally, general (non sugar-specific) component of the phosphoenolpyruvate-dependent sugar phosphotransferase system (sugar PTS). This major carbohydrate active-transport system catalyzes the phosphorylation of incoming sugar substrates concomitantly with their translocation across the cell membrane. The phosphoryl group from phosphoenolpyruvate (PEP) is transferred to the phosphoryl carrier protein HPr by enzyme I. Phospho-HPr then transfers it to the PTS EIIA domain. This chain is Phosphocarrier protein HPr (ptsH), found in Chlamydia pneumoniae (Chlamydophila pneumoniae).